We begin with the raw amino-acid sequence, 287 residues long: Nucleotide-binding protein HD_0584 (287 aa).

8 to 15 (GRSGSGKS) is an ATP binding site. A GTP-binding site is contributed by 56 to 59 (DIRN).

The protein belongs to the RapZ-like family.

Displays ATPase and GTPase activities. This Haemophilus ducreyi (strain 35000HP / ATCC 700724) protein is Nucleotide-binding protein HD_0584.